The primary structure comprises 424 residues: Histidinol dehydrogenase (424 aa).

NAD(+)-binding residues include Y121, Q183, and N206. Substrate contacts are provided by S229, Q251, and H254. The Zn(2+) site is built by Q251 and H254. Active-site proton acceptor residues include E319 and H320. Positions 320, 353, 407, and 412 each coordinate substrate. D353 serves as a coordination point for Zn(2+). H412 contacts Zn(2+).

Belongs to the histidinol dehydrogenase family. Zn(2+) serves as cofactor.

The enzyme catalyses L-histidinol + 2 NAD(+) + H2O = L-histidine + 2 NADH + 3 H(+). Its pathway is amino-acid biosynthesis; L-histidine biosynthesis; L-histidine from 5-phospho-alpha-D-ribose 1-diphosphate: step 9/9. Functionally, catalyzes the sequential NAD-dependent oxidations of L-histidinol to L-histidinaldehyde and then to L-histidine. This Halalkalibacterium halodurans (strain ATCC BAA-125 / DSM 18197 / FERM 7344 / JCM 9153 / C-125) (Bacillus halodurans) protein is Histidinol dehydrogenase.